Here is a 766-residue protein sequence, read N- to C-terminus: EMILIN-3 (766 aa).

A signal peptide spans 1–22 (MGRRRLLVWLCAVAALLSGAQA). One can recognise an EMI domain in the interval 55–131 (HKALCAYVVH…PGFTGKRCPE (77 aa)). 3 cysteine pairs are disulfide-bonded: cysteine 59-cysteine 121, cysteine 86-cysteine 92, and cysteine 120-cysteine 129. Asparagine 66 is a glycosylation site (N-linked (GlcNAc...) asparagine). The interval 132–179 (HLTDHGAASPQLEPEPQIPSGQLDPGPRPPSYSRAAPSPHGRKGPGLF) is disordered. N-linked (GlcNAc...) asparagine glycosylation is present at asparagine 443. Residues 467-491 (GTMLEERVQSLEERLATLAGELSHD) adopt a coiled-coil conformation. N-linked (GlcNAc...) asparagine glycosylation is found at asparagine 562, asparagine 616, and asparagine 732. 2 coiled-coil regions span residues 615-663 (ANTS…QLKA) and 726-761 (SHVD…EQVR).

It is found in the secreted. The protein resides in the extracellular space. It localises to the extracellular matrix. The protein is EMILIN-3 (EMILIN3) of Homo sapiens (Human).